A 230-amino-acid polypeptide reads, in one-letter code: Transcription factor bHLH147 (230 aa).

The span at 1 to 17 (MESISPVSNQLLQPTTT) shows a compositional bias: polar residues. A disordered region spans residues 1-52 (MESISPVSNQLLQPTTTSSNSDRSRRKRKKKSSPSSVEKSPSPSISLEKWRS). The segment covering 33–46 (SPSSVEKSPSPSIS) has biased composition (low complexity). One can recognise a bHLH domain in the interval 147–196 (KQRATVLRLKAKGLPAVQRKVKVLSRLVPGCRKQSLPVVLEETTDYIAAM). The segment at 210 to 230 (VSSSPPPPTPGHEGGQTHMLG) is disordered.

In terms of assembly, homodimer. Interacts with PRE3.

The protein localises to the nucleus. Atypical bHLH transcription factor probably unable to bind DNA. Negatively regulates brassinosteroid signaling. In Arabidopsis thaliana (Mouse-ear cress), this protein is Transcription factor bHLH147 (BHLH147).